A 283-amino-acid chain; its full sequence is Formamidopyrimidine-DNA glycosylase (283 aa).

The Schiff-base intermediate with DNA role is filled by Pro2. Residue Glu3 is the Proton donor of the active site. Lys58 acts as the Proton donor; for beta-elimination activity in catalysis. DNA is bound by residues His100, Arg119, and Lys162. Residues Arg247–Arg283 form an FPG-type zinc finger. Residue Arg273 is the Proton donor; for delta-elimination activity of the active site.

Belongs to the FPG family. In terms of assembly, monomer. Zn(2+) is required as a cofactor.

It catalyses the reaction Hydrolysis of DNA containing ring-opened 7-methylguanine residues, releasing 2,6-diamino-4-hydroxy-5-(N-methyl)formamidopyrimidine.. It carries out the reaction 2'-deoxyribonucleotide-(2'-deoxyribose 5'-phosphate)-2'-deoxyribonucleotide-DNA = a 3'-end 2'-deoxyribonucleotide-(2,3-dehydro-2,3-deoxyribose 5'-phosphate)-DNA + a 5'-end 5'-phospho-2'-deoxyribonucleoside-DNA + H(+). Its function is as follows. Involved in base excision repair of DNA damaged by oxidation or by mutagenic agents. Acts as a DNA glycosylase that recognizes and removes damaged bases. Has a preference for oxidized purines, such as 7,8-dihydro-8-oxoguanine (8-oxoG). Has AP (apurinic/apyrimidinic) lyase activity and introduces nicks in the DNA strand. Cleaves the DNA backbone by beta-delta elimination to generate a single-strand break at the site of the removed base with both 3'- and 5'-phosphates. The protein is Formamidopyrimidine-DNA glycosylase of Jannaschia sp. (strain CCS1).